A 398-amino-acid polypeptide reads, in one-letter code: Cysteine desulfurase 2 (398 aa).

Residues 71–72 (GT), Asn150, Gln178, and 198–200 (SGH) each bind pyridoxal 5'-phosphate. Lys201 is modified (N6-(pyridoxal phosphate)lysine). Thr236 serves as a coordination point for pyridoxal 5'-phosphate. Cys323 serves as the catalytic Cysteine persulfide intermediate. Residue Cys323 participates in [2Fe-2S] cluster binding.

The protein belongs to the class-V pyridoxal-phosphate-dependent aminotransferase family. NifS/IscS subfamily. As to quaternary structure, homodimer. The cofactor is pyridoxal 5'-phosphate.

It carries out the reaction (sulfur carrier)-H + L-cysteine = (sulfur carrier)-SH + L-alanine. In terms of biological role, catalyzes the removal of elemental sulfur atoms from cysteine to produce alanine. Seems to participate in the biosynthesis of the nitrogenase metalloclusters by providing the inorganic sulfur required for the Fe-S core formation. This chain is Cysteine desulfurase 2, found in Trichormus variabilis (strain ATCC 29413 / PCC 7937) (Anabaena variabilis).